Reading from the N-terminus, the 194-residue chain is Mersacidin decarboxylase (194 aa).

His-75 is an active-site residue.

It belongs to the HFCD (homooligomeric flavin containing Cys decarboxylase) superfamily. Homododecamer. FAD serves as cofactor.

Its pathway is antibiotic biosynthesis; mersacidin biosynthesis. Catalyzes the oxidative decarboxylation of the C-terminal cysteine residue of mersacidin to an aminoenethiol residue. This Bacillus sp. (strain HIL-Y85/54728) protein is Mersacidin decarboxylase (mrsD).